We begin with the raw amino-acid sequence, 487 residues long: Glutamyl-tRNA(Gln) amidotransferase subunit A (487 aa).

Catalysis depends on charge relay system residues lysine 77 and serine 152. Serine 176 (acyl-ester intermediate) is an active-site residue.

This sequence belongs to the amidase family. GatA subfamily. As to quaternary structure, heterotrimer of A, B and C subunits.

It catalyses the reaction L-glutamyl-tRNA(Gln) + L-glutamine + ATP + H2O = L-glutaminyl-tRNA(Gln) + L-glutamate + ADP + phosphate + H(+). Functionally, allows the formation of correctly charged Gln-tRNA(Gln) through the transamidation of misacylated Glu-tRNA(Gln) in organisms which lack glutaminyl-tRNA synthetase. The reaction takes place in the presence of glutamine and ATP through an activated gamma-phospho-Glu-tRNA(Gln). The sequence is that of Glutamyl-tRNA(Gln) amidotransferase subunit A from Lactiplantibacillus plantarum (strain ATCC BAA-793 / NCIMB 8826 / WCFS1) (Lactobacillus plantarum).